The sequence spans 279 residues: Ribose-phosphate pyrophosphokinase (279 aa).

ATP is bound by residues 31–33 and 88–89; these read DGE and RQ. Residues histidine 121 and aspartate 159 each coordinate Mg(2+). The active site involves lysine 182. Residues arginine 184, aspartate 208, and 212-216 contribute to the D-ribose 5-phosphate site; that span reads STGGT.

It belongs to the ribose-phosphate pyrophosphokinase family. Class III (archaeal) subfamily. It depends on Mg(2+) as a cofactor.

It is found in the cytoplasm. It carries out the reaction D-ribose 5-phosphate + ATP = 5-phospho-alpha-D-ribose 1-diphosphate + AMP + H(+). The protein operates within metabolic intermediate biosynthesis; 5-phospho-alpha-D-ribose 1-diphosphate biosynthesis; 5-phospho-alpha-D-ribose 1-diphosphate from D-ribose 5-phosphate (route I): step 1/1. Functionally, involved in the biosynthesis of the central metabolite phospho-alpha-D-ribosyl-1-pyrophosphate (PRPP) via the transfer of pyrophosphoryl group from ATP to 1-hydroxyl of ribose-5-phosphate (Rib-5-P). This is Ribose-phosphate pyrophosphokinase from Pyrococcus furiosus (strain ATCC 43587 / DSM 3638 / JCM 8422 / Vc1).